We begin with the raw amino-acid sequence, 431 residues long: MSLSRSLDLTQEDYAVQDAILQYISSNFVSLKPPDVKFFKRHLENVTKVLIQMMRKEDNLFNLIFQKERVAGSFWDKLKIGHPIEFDKNFVLTLPPALYKNIKFTPASPSYVTVNVQNGLKIVKSSKCRTYRPDWFDDNGNILSDKLRFWMESVVNKALATLPPLPNKKYQLEIEGTCYEIGTRKSGPAVTVEVNIDSSGSTYLGITQFCIDLVPAFEFQTKDWPHHIRQCPADTQDKTWNLVPKPLKPEENTADGNIPARLQWRLSFHNQESYIIHNLNHFKAVLKLLKKLRDVKFDQYKMSSYALKTVFMLEKERQNNDFWRRPLSSTFLHMLTVLTEWYGKGKIPFYWDKQHNLLGKLSKDQIKQVYCTLQKINNRIYEGLQSKCESKCDHFIIASTLLDSEELLKIKKDIIVDRSGNKPLAKRQRCS.

Residues Ser73 and 85–87 (EFD) contribute to the ATP site. Residues Glu85, Asp87, and Asp212 each coordinate Mg(2+). A GTP-binding site is contributed by Asp212. Residues Lys290 and 304–308 (SYALK) each bind ATP. Glu316 is a binding site for Mn(2+).

This sequence belongs to the mab-21 family. Mg(2+) serves as cofactor. Requires Mn(2+) as cofactor.

The enzyme catalyses GTP + ATP = 2',3'-cGAMP + 2 diphosphate. It catalyses the reaction GTP + ATP = pppGp(2'-5')A + diphosphate. The catalysed reaction is pppGp(2'-5')A = 2',3'-cGAMP + diphosphate. Nucleotidyltransferase that catalyzes the formation of cyclic GMP-AMP (2',3'-cGAMP) from ATP and GTP and plays a key role in innate immunity. Acts as a key sensor of double-stranded RNA (dsRNA), the presence of dsRNA in the cytoplasm being a danger signal that triggers the immune responses. Directly binds dsRNA, activating the nucleotidyltransferase activity, leading to synthesis of 2',3'-cGAMP, a second messenger that binds to and activates Sting, thereby triggering the immune response via activation of the NF-kappa-B transcription factor. The sequence is that of Cyclic GMP-AMP synthase-like receptor from Frankliniella occidentalis (Western flower thrips).